The chain runs to 789 residues: Cadherin-10 (789 aa).

The N-terminal stretch at 1–22 is a signal peptide; the sequence is MTIQQVLLLLLLWMWLLHPCRT. Positions 23-54 are excised as a propeptide; the sequence is EMLFRRTPDLRPKGFVGRTSGSDGKALHRQKR. 5 consecutive Cadherin domains span residues 55–160, 161–269, 270–384, 385–487, and 488–606; these read GWMW…EPTF, PEEI…PPRF, PQST…PPVF, SRSS…DNAP, and QFAV…LLLP. Over 55-606 the chain is Extracellular; that stretch reads GWMWNQFFLL…SCNAEALLLP (552 aa). N-linked (GlcNAc...) asparagine glycosylation is present at Asn-256. 3 N-linked (GlcNAc...) asparagine glycosylation sites follow: Asn-438, Asn-456, and Asn-534. The chain crosses the membrane as a helical span at residues 607–634; the sequence is AGLSTGALIAILLCIIILLVIVVLFAAL. Residues 635–789 are Cytoplasmic-facing; the sequence is KRQRKKEPLI…GGGESDKDAS (155 aa).

It is found in the cell membrane. Cadherins are calcium-dependent cell adhesion proteins. They preferentially interact with themselves in a homophilic manner in connecting cells; cadherins may thus contribute to the sorting of heterogeneous cell types. The polypeptide is Cadherin-10 (CDH10) (Gallus gallus (Chicken)).